A 487-amino-acid polypeptide reads, in one-letter code: N-succinylglutamate 5-semialdehyde dehydrogenase (487 aa).

221–226 (GSSDTG) is a binding site for NAD(+). Active-site residues include E244 and C278.

This sequence belongs to the aldehyde dehydrogenase family. AstD subfamily.

The catalysed reaction is N-succinyl-L-glutamate 5-semialdehyde + NAD(+) + H2O = N-succinyl-L-glutamate + NADH + 2 H(+). It participates in amino-acid degradation; L-arginine degradation via AST pathway; L-glutamate and succinate from L-arginine: step 4/5. Functionally, catalyzes the NAD-dependent reduction of succinylglutamate semialdehyde into succinylglutamate. The polypeptide is N-succinylglutamate 5-semialdehyde dehydrogenase (Burkholderia vietnamiensis (strain G4 / LMG 22486) (Burkholderia cepacia (strain R1808))).